The following is a 121-amino-acid chain: Ribosome-binding factor A (121 aa).

Belongs to the RbfA family. Monomer. Binds 30S ribosomal subunits, but not 50S ribosomal subunits or 70S ribosomes.

It is found in the cytoplasm. One of several proteins that assist in the late maturation steps of the functional core of the 30S ribosomal subunit. Associates with free 30S ribosomal subunits (but not with 30S subunits that are part of 70S ribosomes or polysomes). Required for efficient processing of 16S rRNA. May interact with the 5'-terminal helix region of 16S rRNA. The protein is Ribosome-binding factor A of Hydrogenovibrio crunogenus (strain DSM 25203 / XCL-2) (Thiomicrospira crunogena).